The primary structure comprises 380 residues: Carbamoyl phosphate synthase small chain (380 aa).

Residues 1–184 form a CPSase region; it reads MTTSTRGAHR…EAYVVPAIGE (184 aa). Positions 55, 236, and 238 each coordinate L-glutamine. One can recognise a Glutamine amidotransferase type-1 domain in the interval 188 to 380; it reads TVAAVDLGIK…FVNLMEGQRA (193 aa). Cys264 serves as the catalytic Nucleophile. L-glutamine contacts are provided by Phe265, Gln268, Asn306, Gly308, and Phe309. Active-site residues include His354 and Glu356.

It belongs to the CarA family. In terms of assembly, composed of two chains; the small (or glutamine) chain promotes the hydrolysis of glutamine to ammonia, which is used by the large (or ammonia) chain to synthesize carbamoyl phosphate. Tetramer of heterodimers (alpha,beta)4.

The catalysed reaction is hydrogencarbonate + L-glutamine + 2 ATP + H2O = carbamoyl phosphate + L-glutamate + 2 ADP + phosphate + 2 H(+). It catalyses the reaction L-glutamine + H2O = L-glutamate + NH4(+). It participates in amino-acid biosynthesis; L-arginine biosynthesis; carbamoyl phosphate from bicarbonate: step 1/1. Its pathway is pyrimidine metabolism; UMP biosynthesis via de novo pathway; (S)-dihydroorotate from bicarbonate: step 1/3. In terms of biological role, small subunit of the glutamine-dependent carbamoyl phosphate synthetase (CPSase). CPSase catalyzes the formation of carbamoyl phosphate from the ammonia moiety of glutamine, carbonate, and phosphate donated by ATP, constituting the first step of 2 biosynthetic pathways, one leading to arginine and/or urea and the other to pyrimidine nucleotides. The small subunit (glutamine amidotransferase) binds and cleaves glutamine to supply the large subunit with the substrate ammonia. In Streptomyces coelicolor (strain ATCC BAA-471 / A3(2) / M145), this protein is Carbamoyl phosphate synthase small chain.